We begin with the raw amino-acid sequence, 140 residues long: Large ribosomal subunit protein uL11 (140 aa).

This sequence belongs to the universal ribosomal protein uL11 family. Part of the ribosomal stalk of the 50S ribosomal subunit. Interacts with L10 and the large rRNA to form the base of the stalk. L10 forms an elongated spine to which L12 dimers bind in a sequential fashion forming a multimeric L10(L12)X complex. Post-translationally, one or more lysine residues are methylated.

Forms part of the ribosomal stalk which helps the ribosome interact with GTP-bound translation factors. The sequence is that of Large ribosomal subunit protein uL11 from Geotalea daltonii (strain DSM 22248 / JCM 15807 / FRC-32) (Geobacter daltonii).